A 370-amino-acid chain; its full sequence is Cobalt-precorrin-5B C(1)-methyltransferase (370 aa).

The protein belongs to the CbiD family.

The catalysed reaction is Co-precorrin-5B + S-adenosyl-L-methionine = Co-precorrin-6A + S-adenosyl-L-homocysteine. It functions in the pathway cofactor biosynthesis; adenosylcobalamin biosynthesis; cob(II)yrinate a,c-diamide from sirohydrochlorin (anaerobic route): step 6/10. In terms of biological role, catalyzes the methylation of C-1 in cobalt-precorrin-5B to form cobalt-precorrin-6A. The chain is Cobalt-precorrin-5B C(1)-methyltransferase from Pseudomonas savastanoi pv. phaseolicola (strain 1448A / Race 6) (Pseudomonas syringae pv. phaseolicola (strain 1448A / Race 6)).